The following is a 275-amino-acid chain: Formamidopyrimidine-DNA glycosylase (275 aa).

The active-site Schiff-base intermediate with DNA is the P2. The active-site Proton donor is the E3. K58 acts as the Proton donor; for beta-elimination activity in catalysis. Residues H91 and R110 each contribute to the DNA site. Residues 238 to 272 (QVYGQTGKSCPRCGQAIVKLKVGGRGTHICPKCQK) form an FPG-type zinc finger. R262 functions as the Proton donor; for delta-elimination activity in the catalytic mechanism.

It belongs to the FPG family. In terms of assembly, monomer. Requires Zn(2+) as cofactor.

It carries out the reaction Hydrolysis of DNA containing ring-opened 7-methylguanine residues, releasing 2,6-diamino-4-hydroxy-5-(N-methyl)formamidopyrimidine.. The catalysed reaction is 2'-deoxyribonucleotide-(2'-deoxyribose 5'-phosphate)-2'-deoxyribonucleotide-DNA = a 3'-end 2'-deoxyribonucleotide-(2,3-dehydro-2,3-deoxyribose 5'-phosphate)-DNA + a 5'-end 5'-phospho-2'-deoxyribonucleoside-DNA + H(+). Involved in base excision repair of DNA damaged by oxidation or by mutagenic agents. Acts as a DNA glycosylase that recognizes and removes damaged bases. Has a preference for oxidized purines, such as 7,8-dihydro-8-oxoguanine (8-oxoG). Has AP (apurinic/apyrimidinic) lyase activity and introduces nicks in the DNA strand. Cleaves the DNA backbone by beta-delta elimination to generate a single-strand break at the site of the removed base with both 3'- and 5'-phosphates. This is Formamidopyrimidine-DNA glycosylase from Streptococcus pyogenes serotype M3 (strain ATCC BAA-595 / MGAS315).